A 199-amino-acid chain; its full sequence is Peroxiredoxin-2 (199 aa).

Residues 7 to 165 (AHVGKPAPEF…ALRLVQAFQY (159 aa)) form the Thioredoxin domain. C52 acts as the Cysteine sulfenic acid (-SOH) intermediate in catalysis. At S113 the chain carries Phosphoserine. T183 is subject to Phosphothreonine. K197 is subject to N6-acetyllysine.

The protein belongs to the peroxiredoxin family. AhpC/Prx1 subfamily. Homodimer; disulfide-linked, upon oxidation. 5 homodimers assemble to form a ring-like decamer. Interacts with TIPIN. In terms of processing, the enzyme can be inactivated by further oxidation of the cysteine sulfenic acid (C(P)-SOH) to sulphinic acid (C(P)-SO2H) instead of its condensation to a disulfide bond. It can be reactivated by forming a transient disulfide bond with sulfiredoxin SRXN1, which reduces the cysteine sulfinic acid in an ATP- and Mg-dependent manner. Acetylation increases resistance to transition to high molecular-mass complexes. Deacetylated by HDAC6 which decreases reducing activity.

The protein resides in the cytoplasm. The catalysed reaction is a hydroperoxide + [thioredoxin]-dithiol = an alcohol + [thioredoxin]-disulfide + H2O. Functionally, thiol-specific peroxidase that catalyzes the reduction of hydrogen peroxide and organic hydroperoxides to water and alcohols, respectively. Plays a role in cell protection against oxidative stress by detoxifying peroxides and as sensor of hydrogen peroxide-mediated signaling events. Might participate in the signaling cascades of growth factors and tumor necrosis factor-alpha by regulating the intracellular concentrations of H(2)O(2). This Bos taurus (Bovine) protein is Peroxiredoxin-2 (PRDX2).